The primary structure comprises 542 residues: MAACTSSLVSLLLLLLLLLLLLVAGEATAEAALNFTRQDFPGGLRRRHICLPGFRDADSITFPRDIESLTCGTHMCLDPRGSHTSVTQCHGECHRRNVIESQSRFRRTYEGATGEDGRTPSIWDTFTHSGRMADNSTGDRAAAGYHKYKEDVKLMSDTGLEAYRFSISWSRLIPRGRGPINPKGLEYYNDLIDKLVKRGEICDCSMGIEIHVTLYHLDFPQALQDEYNGWLSPRIIEDFTAYADVCFREFGDLVRHWTTVGEPNVLSIAGYDSGVIPPCRCSPPFGTSCAAGDSTVEPYFAAHNSILAHASAVRLYWDKYQAKQKGVVGTNIYSFWPYPLSRSCADIDAVQRVLDFTIGWILDPLVYGDYPEIMKKQAGSRIPSFTKEQSELIRGSADFIGINHYKSLYVSDGSNREKAGLRDYNADMAAHFRGFGQFDKEDSLNDTERVEYLSSYMGGTLAALRNGANVKGYFVWSFLDVFELFAGYHSPFGLHHVDFEDPSLPRQPKLSAQWYSKFLRSEIGINIEKMVSPDEHEHAYYQ.

The first 29 residues, 1 to 29 (MAACTSSLVSLLLLLLLLLLLLVAGEATA), serve as a signal peptide directing secretion. Asn34 is a glycosylation site (N-linked (GlcNAc...) asparagine). Gln88 lines the a beta-D-glucoside pocket. N-linked (GlcNAc...) asparagine glycosylation occurs at Asn135. His216 serves as a coordination point for a beta-D-glucoside. Residue Glu262 is the Proton donor of the active site. A disulfide bridge links Cys281 with Cys289. Residue Tyr405 participates in a beta-D-glucoside binding. Asn445 carries N-linked (GlcNAc...) asparagine glycosylation. A beta-D-glucoside contacts are provided by Trp476 and Phe492.

Belongs to the glycosyl hydrolase 1 family.

It catalyses the reaction Hydrolysis of terminal, non-reducing beta-D-glucosyl residues with release of beta-D-glucose.. In Oryza sativa subsp. japonica (Rice), this protein is Putative beta-glucosidase 23 (BGLU23).